A 612-amino-acid polypeptide reads, in one-letter code: Dihydroxy-acid dehydratase (612 aa).

D81 provides a ligand contact to Mg(2+). A [2Fe-2S] cluster-binding site is contributed by C122. Mg(2+) contacts are provided by D123 and K124. Position 124 is an N6-carboxylysine (K124). C195 is a [2Fe-2S] cluster binding site. Mg(2+) is bound at residue E491. S517 functions as the Proton acceptor in the catalytic mechanism.

The protein belongs to the IlvD/Edd family. In terms of assembly, homodimer. Requires [2Fe-2S] cluster as cofactor. Mg(2+) is required as a cofactor.

The catalysed reaction is (2R)-2,3-dihydroxy-3-methylbutanoate = 3-methyl-2-oxobutanoate + H2O. It catalyses the reaction (2R,3R)-2,3-dihydroxy-3-methylpentanoate = (S)-3-methyl-2-oxopentanoate + H2O. It participates in amino-acid biosynthesis; L-isoleucine biosynthesis; L-isoleucine from 2-oxobutanoate: step 3/4. It functions in the pathway amino-acid biosynthesis; L-valine biosynthesis; L-valine from pyruvate: step 3/4. In terms of biological role, functions in the biosynthesis of branched-chain amino acids. Catalyzes the dehydration of (2R,3R)-2,3-dihydroxy-3-methylpentanoate (2,3-dihydroxy-3-methylvalerate) into 2-oxo-3-methylpentanoate (2-oxo-3-methylvalerate) and of (2R)-2,3-dihydroxy-3-methylbutanoate (2,3-dihydroxyisovalerate) into 2-oxo-3-methylbutanoate (2-oxoisovalerate), the penultimate precursor to L-isoleucine and L-valine, respectively. The protein is Dihydroxy-acid dehydratase of Rhizobium etli (strain ATCC 51251 / DSM 11541 / JCM 21823 / NBRC 15573 / CFN 42).